The primary structure comprises 410 residues: Magnesium transporter NIPA3 (410 aa).

The Extracellular segment spans residues 1 to 67; that stretch reads MGAQVRLPPG…ISANVENKYS (67 aa). N-linked (GlcNAc...) asparagine glycosylation is found at Asn-25, Asn-35, Asn-50, and Asn-55. Residues 68 to 88 traverse the membrane as a helical segment; that stretch reads LYVGLVLAVSSSIFIGSSFIL. Over 89–114 the chain is Cytoplasmic; it reads KKKGLLQLASKGFTRAGQGGHSYLKE. Residues 115–135 traverse the membrane as a helical segment; sequence WLWWVGLLSMGAGEAANFAAY. Residue Ala-136 is a topological domain, extracellular. Residues 137–157 traverse the membrane as a helical segment; sequence FAPATLVTPLGALSVLISAIL. Residues 158–165 are Cytoplasmic-facing; that stretch reads SSYFLNEH. Residues 166 to 186 traverse the membrane as a helical segment; the sequence is LNIHGKIGCILSILGSTVMVI. Residues 187–207 lie on the Extracellular side of the membrane; that stretch reads HAPQEEEVTSLHEMEMKLRDP. The helical transmembrane segment at 208–228 threads the bilayer; sequence GFISFAVIITVISLVLILIVA. Residues 229–233 lie on the Cytoplasmic side of the membrane; that stretch reads PKKGQ. A helical transmembrane segment spans residues 234–254; the sequence is TNILVYISICSLIGAFSVSSV. Residues 255-273 lie on the Extracellular side of the membrane; that stretch reads KGLGIAIKELIEWKPVYKH. The helical transmembrane segment at 274-294 threads the bilayer; it reads PLVFVLLAVLVLSVTTQINYL. Residues 295–305 lie on the Cytoplasmic side of the membrane; sequence NKALDTFNTSL. Residues 306–326 traverse the membrane as a helical segment; it reads VTPIYYVFFTSMVVTCSAILF. Topologically, residues 327 to 336 are extracellular; that stretch reads QEWYGMTAGD. The chain crosses the membrane as a helical span at residues 337 to 357; it reads IIGTLSGFFTIIIGIFLLHAF. Residues 358–410 are Cytoplasmic-facing; sequence KNTDITWSELTSTAKKEAVSLNVNENNYVLLENLECSAPGYNDDVTLFSRTDD.

Belongs to the NIPA family. Expressed in the pancreatic islets.

It is found in the golgi apparatus membrane. The enzyme catalyses Mg(2+)(in) = Mg(2+)(out). Its function is as follows. Acts as a Mg(2+) transporter. Can also transport other divalent cations such as Fe(2+), Sr(2+), Ba(2+), Mn(2+), Cu(2+) and Co(2+) but to a much less extent than Mg(2+). The protein is Magnesium transporter NIPA3 (NIPAL1) of Homo sapiens (Human).